A 146-amino-acid polypeptide reads, in one-letter code: Large ribosomal subunit protein bL19 (146 aa).

The protein belongs to the bacterial ribosomal protein bL19 family.

This protein is located at the 30S-50S ribosomal subunit interface and may play a role in the structure and function of the aminoacyl-tRNA binding site. This is Large ribosomal subunit protein bL19 from Bartonella henselae (strain ATCC 49882 / DSM 28221 / CCUG 30454 / Houston 1) (Rochalimaea henselae).